The following is a 274-amino-acid chain: 3-methyl-2-oxobutanoate hydroxymethyltransferase (274 aa).

Mg(2+) is bound by residues D49 and D88. Residues 49 to 50 (DS), D88, and K118 each bind 3-methyl-2-oxobutanoate. E120 contributes to the Mg(2+) binding site. The Proton acceptor role is filled by E187.

It belongs to the PanB family. As to quaternary structure, homodecamer; pentamer of dimers. Mg(2+) is required as a cofactor.

Its subcellular location is the cytoplasm. The enzyme catalyses 3-methyl-2-oxobutanoate + (6R)-5,10-methylene-5,6,7,8-tetrahydrofolate + H2O = 2-dehydropantoate + (6S)-5,6,7,8-tetrahydrofolate. It functions in the pathway cofactor biosynthesis; (R)-pantothenate biosynthesis; (R)-pantoate from 3-methyl-2-oxobutanoate: step 1/2. Functionally, catalyzes the reversible reaction in which hydroxymethyl group from 5,10-methylenetetrahydrofolate is transferred onto alpha-ketoisovalerate to form ketopantoate. The chain is 3-methyl-2-oxobutanoate hydroxymethyltransferase from Rhodopseudomonas palustris (strain ATCC BAA-98 / CGA009).